The sequence spans 217 residues: Membrane-associated progesterone receptor component 2 (217 aa).

Residue S15 is glycosylated (O-linked (Xyl...) (chondroitin sulfate) serine). Residues 40–62 traverse the membrane as a helical segment; that stretch reads ALLATGGEMLLNVALVALVLLGA. Phosphoserine occurs at positions 84, 98, and 202. In terms of domain architecture, Cytochrome b5 heme-binding spans 96–195; it reads DFSLEQLRQY…EKYDYVGRLL (100 aa). Residues 196-217 form a disordered region; it reads KPGEEPSEYTDEEDTKDHSKQD. Residues 200–209 are compositionally biased toward acidic residues; the sequence is EPSEYTDEED. The residue at position 204 (Y204) is a Phosphotyrosine. A Phosphothreonine modification is found at T205.

This sequence belongs to the cytochrome b5 family. MAPR subfamily. Interacts with PGRMC1. Interacts with AAAS.

It localises to the membrane. The protein resides in the nucleus envelope. It is found in the endoplasmic reticulum. The protein localises to the secreted. Its function is as follows. Required for the maintenance of uterine histoarchitecture and normal female reproductive lifespan. May serve as a universal non-classical progesterone receptor in the uterus. Intracellular heme chaperone required for delivery of labile, or signaling heme, to the nucleus. Plays a role in adipocyte function and systemic glucose homeostasis. In brown fat, which has a high demand for heme, delivery of labile heme in the nucleus regulates the activity of heme-responsive transcriptional repressors such as NR1D1 and BACH1. The chain is Membrane-associated progesterone receptor component 2 from Rattus norvegicus (Rat).